The sequence spans 803 residues: Phenylalanine--tRNA ligase beta subunit (803 aa).

The 111-residue stretch at 40–150 folds into the tRNA-binding domain; the sequence is SNKFYGIVIA…IDAPIGCNFY (111 aa). One can recognise a B5 domain in the interval 405–480; it reads PKIKIIKLHR…RIYGYNHIPK (76 aa). Mg(2+) contacts are provided by aspartate 458 and glutamate 468. The FDX-ACB domain maps to 710–803; it reads SKFPKNYRDI…LKKHFNAIFR (94 aa).

It belongs to the phenylalanyl-tRNA synthetase beta subunit family. Type 1 subfamily. In terms of assembly, tetramer of two alpha and two beta subunits. Requires Mg(2+) as cofactor.

Its subcellular location is the cytoplasm. It carries out the reaction tRNA(Phe) + L-phenylalanine + ATP = L-phenylalanyl-tRNA(Phe) + AMP + diphosphate + H(+). The chain is Phenylalanine--tRNA ligase beta subunit from Blochmanniella floridana.